Consider the following 131-residue polypeptide: Holo-[acyl-carrier-protein] synthase (131 aa).

Aspartate 8 and glutamate 59 together coordinate Mg(2+).

This sequence belongs to the P-Pant transferase superfamily. AcpS family. The cofactor is Mg(2+).

The protein resides in the cytoplasm. The catalysed reaction is apo-[ACP] + CoA = holo-[ACP] + adenosine 3',5'-bisphosphate + H(+). Transfers the 4'-phosphopantetheine moiety from coenzyme A to a Ser of acyl-carrier-protein. This is Holo-[acyl-carrier-protein] synthase from Rickettsia felis (strain ATCC VR-1525 / URRWXCal2) (Rickettsia azadi).